The following is a 555-amino-acid chain: Protein NRT1/ PTR FAMILY 5.12 (555 aa).

The next 2 membrane-spanning stretches (helical) occupy residues 53–73 (FAYF…LGES) and 83–103 (LWLG…DSFL). A Phosphothreonine modification is found at Thr108. 10 helical membrane passes run 109 to 129 (ILLT…SATI), 148 to 168 (VIIF…FKVC), 190 to 210 (SYFN…RLVT), 221 to 241 (LGYA…LLGI), 315 to 335 (AVLS…VFAQ), 357 to 377 (VPAA…IPIY), 401 to 421 (ISTG…VEMK), 443 to 463 (VCWL…TMVG), 482 to 502 (ALYL…VSVI), and 526 to 546 (YFYW…VYFA).

Belongs to the major facilitator superfamily. Proton-dependent oligopeptide transporter (POT/PTR) (TC 2.A.17) family. Expressed in shoots and roots.

It is found in the membrane. The protein is Protein NRT1/ PTR FAMILY 5.12 (NPF5.12) of Arabidopsis thaliana (Mouse-ear cress).